The sequence spans 109 residues: UPF0235 protein MA_4097 (109 aa).

This sequence belongs to the UPF0235 family.

The polypeptide is UPF0235 protein MA_4097 (Methanosarcina acetivorans (strain ATCC 35395 / DSM 2834 / JCM 12185 / C2A)).